The sequence spans 535 residues: Bifunctional purine biosynthesis protein PurH (535 aa).

The region spanning 6–151 (TRLPVRRALI…KNHKDVAIVV (146 aa)) is the MGS-like domain.

This sequence belongs to the PurH family.

It carries out the reaction (6R)-10-formyltetrahydrofolate + 5-amino-1-(5-phospho-beta-D-ribosyl)imidazole-4-carboxamide = 5-formamido-1-(5-phospho-D-ribosyl)imidazole-4-carboxamide + (6S)-5,6,7,8-tetrahydrofolate. The enzyme catalyses IMP + H2O = 5-formamido-1-(5-phospho-D-ribosyl)imidazole-4-carboxamide. Its pathway is purine metabolism; IMP biosynthesis via de novo pathway; 5-formamido-1-(5-phospho-D-ribosyl)imidazole-4-carboxamide from 5-amino-1-(5-phospho-D-ribosyl)imidazole-4-carboxamide (10-formyl THF route): step 1/1. It functions in the pathway purine metabolism; IMP biosynthesis via de novo pathway; IMP from 5-formamido-1-(5-phospho-D-ribosyl)imidazole-4-carboxamide: step 1/1. This chain is Bifunctional purine biosynthesis protein PurH, found in Azotobacter vinelandii (strain DJ / ATCC BAA-1303).